The primary structure comprises 377 residues: MDLNINKTTPVLSDPTTPVSKTRLGSSFPSGRFMMNSRKKIPKLDDVRSNGWLDAMISSSPPRKRLVKDFNIEIAPEDDFSQRAWMLKYPSAITSFAHIAAQAKNKKIAVFLDYDGTLSPIVDDPDRAIMSDAMRAAVKDVAKYFPTAIISGRSRDKVYQLVGLTELYYAGSHGMDIMTPVNPNGSPEDPNCIKTTDQQGEEVNLFQPAKEFIPVIEEVYNNLVEITKCIKGAKVENHKFCTSVHYRNVDEKDWPLVAQRVHDHLKRYPRLRITHGRKVLEVRPVIEWNKGKAVEFLLESLGLSNNDEFLPIFIGDDKTDEDAFKVLREGNRGFGILVSSVPKESNAFYSLRDPSEVKKFLKTLVKWGKMESSKTSF.

Residues 1-20 (MDLNINKTTPVLSDPTTPVS) are disordered.

Belongs to the trehalose phosphatase family. A divalent metal cation is required as a cofactor.

It catalyses the reaction alpha,alpha-trehalose 6-phosphate + H2O = alpha,alpha-trehalose + phosphate. It participates in glycan biosynthesis; trehalose biosynthesis. In terms of biological role, removes the phosphate from trehalose 6-phosphate to produce free trehalose. Trehalose accumulation in plant may improve abiotic stress tolerance. The sequence is that of Probable trehalose-phosphate phosphatase G (TPPG) from Arabidopsis thaliana (Mouse-ear cress).